A 348-amino-acid polypeptide reads, in one-letter code: Mitogen-activated protein kinase kinase 5 (348 aa).

Disordered stretches follow at residues Met-1 to Leu-26 and Leu-35 to Ser-54. Position 6 is a phosphoserine; by ASK7 (Ser-6). A Protein kinase domain is found at Leu-70–Ile-325. ATP contacts are provided by residues Ile-76–Val-84 and Lys-99. The Proton acceptor role is filled by Asp-187. A Phosphothreonine modification is found at Thr-215. Ser-221 carries the phosphoserine; by ASK7 modification. Ser-221 bears the Phosphoserine mark. Phosphothreonine; by ASK7 is present on Thr-225. Position 313 is an ADP-ribosylarginine; by HopF2 (Arg-313).

Belongs to the protein kinase superfamily. STE Ser/Thr protein kinase family. MAP kinase kinase subfamily. In terms of assembly, interacts with P.syringae type III effector HopF2. Interacts with BZR1. Interacts with MPK6 and MPK3. Interacts with RACK1A, RACK1B and RACK1C. Interacts with MAPKKK5 mainly in the cytosol. Binds to BASL. Interacts with MAPKKK20. Phosphorylation at Thr-215 and Ser-221 by MAP kinase kinase kinases positively regulates kinase activity. Phosphorylated by MAPKKK5 and MAPKKK20 in response to abscisic acid (ABA). In terms of processing, ADP-ribosylation at Arg-313 by P.syringae type III effector HopF2 reduces the ability of the protein to phosphorylate downstream MPK6. In terms of tissue distribution, expressed higher in stems and leaves than in flowers and roots.

The enzyme catalyses L-seryl-[protein] + ATP = O-phospho-L-seryl-[protein] + ADP + H(+). The catalysed reaction is L-threonyl-[protein] + ATP = O-phospho-L-threonyl-[protein] + ADP + H(+). It carries out the reaction L-tyrosyl-[protein] + ATP = O-phospho-L-tyrosyl-[protein] + ADP + H(+). Activated through serine and threonine phosphorylation by MEKK1 and MAPKKK20 in response to abscisic acid (ABA). Inhibited through phosphorylation by GSK3/Shaggy-like kinase ASKs. Inhibited through ADP-Ribosylation by P.syringae HopF2. Activated after high light stress. In terms of biological role, mitogen-activated protein kinase kinase (MAPKK) which regulates abscisic acid (ABA) responses in a MAPKKK20-MKK5-MPK6 cascade involved in root growth (e.g. root cell division and elongation) and stomatal response, probably via MAPK6 activation by protein phosphorylation. Involved in the second phase of hydrogen peroxide generation during hypersensitive response-like cell death. Involved in the innate immune MAP kinase signaling cascade (MEKK1, MKK4/MKK5 and MPK3/MPK6) downstream of bacterial flagellin receptor FLS2. Activates by phosphorylation the downstream MPK3 and MPK6. YDA-MKK4/MKK5-MPK3/MPK6 module regulates stomatal cell fate before the guard mother cell (GMC) is specified. This MAPK cascade also functions downstream of the ER receptor in regulating coordinated local cell proliferation, which shapes the morphology of plant organs. MKK4 and MKK5 participate in the regulation of floral organ abscission. Target of the Pseudomonas syringae type III effector HopF2, that inhibits the activation of the downstream MPK6 and PAMP-triggered immunity. Plays a critical role in high light stress tolerance by the mediation of the Cu/Zn SODs CSD1 and CSD2 gene expression. Phosphorylates BZR1 in vitro. This is Mitogen-activated protein kinase kinase 5 from Arabidopsis thaliana (Mouse-ear cress).